The primary structure comprises 124 residues: UPF0299 membrane protein VIBHAR_02118 (124 aa).

The next 4 helical transmembrane spans lie at 6-26, 35-55, 72-92, and 95-115; these read LLQL…LGIG, VSVP…TLGL, MILL…MLLA, and LPII…LAWF.

Belongs to the UPF0299 family.

It is found in the cell inner membrane. The chain is UPF0299 membrane protein VIBHAR_02118 from Vibrio campbellii (strain ATCC BAA-1116).